The following is a 706-amino-acid chain: Signal transducer and activator of transcription 1 (706 aa).

An SH2 domain is found at 477–574; the sequence is WCIGFISKND…EEMLRFFESE (98 aa).

Belongs to the transcription factor STAT family. In terms of assembly, forms a homodimer or a heterodimer with a related family member. As to expression, expressed in adult and larval pharynx, head ganglia, tail ganglia, ventral nerve cord and body muscles.

Its subcellular location is the cytoplasm. It is found in the nucleus. Functionally, carries out a dual function: signal transduction and activation of transcription. Activated STAT proteins play a role in repression of dauer formation. Neuronal expression is held in check by negative signals through the TGF-beta pathway that target the daf-3 transcription factor. The chain is Signal transducer and activator of transcription 1 from Caenorhabditis elegans.